A 298-amino-acid polypeptide reads, in one-letter code: Protease HtpX homolog (298 aa).

The next 2 membrane-spanning stretches (helical) occupy residues 14–34 and 39–59; these read VVLLVVFFALLALIGASAGYL and YAMGLVLALVIGMIYATSMIF. Histidine 143 contributes to the Zn(2+) binding site. The active site involves glutamate 144. Histidine 147 contributes to the Zn(2+) binding site. The next 2 membrane-spanning stretches (helical) occupy residues 158–178 and 197–217; these read IAVALASAVTVISSIGGRMLW and IITLLLSLLSLLLAPLVASLI. Zn(2+) is bound at residue glutamate 226.

It belongs to the peptidase M48B family. Zn(2+) is required as a cofactor.

It is found in the cell membrane. This is Protease HtpX homolog from Streptococcus pyogenes serotype M49 (strain NZ131).